A 312-amino-acid polypeptide reads, in one-letter code: Aspartate carbamoyltransferase catalytic subunit (312 aa).

Positions 57 and 58 each coordinate carbamoyl phosphate. Lysine 85 provides a ligand contact to L-aspartate. Arginine 107, histidine 135, and glutamine 138 together coordinate carbamoyl phosphate. The L-aspartate site is built by arginine 168 and arginine 222. Carbamoyl phosphate is bound by residues glycine 264 and proline 265.

It belongs to the aspartate/ornithine carbamoyltransferase superfamily. ATCase family. As to quaternary structure, heterododecamer (2C3:3R2) of six catalytic PyrB chains organized as two trimers (C3), and six regulatory PyrI chains organized as three dimers (R2).

The enzyme catalyses carbamoyl phosphate + L-aspartate = N-carbamoyl-L-aspartate + phosphate + H(+). Its pathway is pyrimidine metabolism; UMP biosynthesis via de novo pathway; (S)-dihydroorotate from bicarbonate: step 2/3. Catalyzes the condensation of carbamoyl phosphate and aspartate to form carbamoyl aspartate and inorganic phosphate, the committed step in the de novo pyrimidine nucleotide biosynthesis pathway. The protein is Aspartate carbamoyltransferase catalytic subunit of Carboxydothermus hydrogenoformans (strain ATCC BAA-161 / DSM 6008 / Z-2901).